The chain runs to 292 residues: Ribosomal protein L11 methyltransferase (292 aa).

Residues threonine 136, glycine 159, aspartate 181, and asparagine 228 each coordinate S-adenosyl-L-methionine.

Belongs to the methyltransferase superfamily. PrmA family.

It localises to the cytoplasm. It carries out the reaction L-lysyl-[protein] + 3 S-adenosyl-L-methionine = N(6),N(6),N(6)-trimethyl-L-lysyl-[protein] + 3 S-adenosyl-L-homocysteine + 3 H(+). Its function is as follows. Methylates ribosomal protein L11. The protein is Ribosomal protein L11 methyltransferase of Agrobacterium fabrum (strain C58 / ATCC 33970) (Agrobacterium tumefaciens (strain C58)).